Consider the following 399-residue polypeptide: Lipoyl synthase, mitochondrial (399 aa).

The N-terminal 30 residues, 1-30 (MRAVLELTRRRARNARFARARAVVGARARA), are a transit peptide targeting the mitochondrion. A compositionally biased stretch (basic and acidic residues) spans 31–41 (ADAQELRDDSK). The segment at 31 to 58 (ADAQELRDDSKGGSSVDKATSTAAEARE) is disordered. Residues Cys-131, Cys-136, Cys-142, Cys-162, Cys-166, Cys-169, and Ser-375 each coordinate [4Fe-4S] cluster. Residues 145 to 364 (GGDGKTATAT…QEIAEEMGFL (220 aa)) enclose the Radical SAM core domain.

This sequence belongs to the radical SAM superfamily. Lipoyl synthase family. Requires [4Fe-4S] cluster as cofactor.

The protein localises to the mitochondrion. The catalysed reaction is [[Fe-S] cluster scaffold protein carrying a second [4Fe-4S](2+) cluster] + N(6)-octanoyl-L-lysyl-[protein] + 2 oxidized [2Fe-2S]-[ferredoxin] + 2 S-adenosyl-L-methionine + 4 H(+) = [[Fe-S] cluster scaffold protein] + N(6)-[(R)-dihydrolipoyl]-L-lysyl-[protein] + 4 Fe(3+) + 2 hydrogen sulfide + 2 5'-deoxyadenosine + 2 L-methionine + 2 reduced [2Fe-2S]-[ferredoxin]. The protein operates within protein modification; protein lipoylation via endogenous pathway; protein N(6)-(lipoyl)lysine from octanoyl-[acyl-carrier-protein]: step 2/2. In terms of biological role, catalyzes the radical-mediated insertion of two sulfur atoms into the C-6 and C-8 positions of the octanoyl moiety bound to the lipoyl domains of lipoate-dependent enzymes, thereby converting the octanoylated domains into lipoylated derivatives. The chain is Lipoyl synthase, mitochondrial from Ostreococcus lucimarinus (strain CCE9901).